We begin with the raw amino-acid sequence, 303 residues long: Probable 5-dehydro-4-deoxyglucarate dehydratase (303 aa).

The protein belongs to the DapA family.

The catalysed reaction is 5-dehydro-4-deoxy-D-glucarate + H(+) = 2,5-dioxopentanoate + CO2 + H2O. It functions in the pathway carbohydrate acid metabolism; D-glucarate degradation; 2,5-dioxopentanoate from D-glucarate: step 2/2. This Acinetobacter baumannii (strain AB307-0294) protein is Probable 5-dehydro-4-deoxyglucarate dehydratase.